The following is a 104-amino-acid chain: Large ribosomal subunit protein uL24 (104 aa).

This sequence belongs to the universal ribosomal protein uL24 family. Part of the 50S ribosomal subunit.

In terms of biological role, one of two assembly initiator proteins, it binds directly to the 5'-end of the 23S rRNA, where it nucleates assembly of the 50S subunit. Its function is as follows. One of the proteins that surrounds the polypeptide exit tunnel on the outside of the subunit. The chain is Large ribosomal subunit protein uL24 from Herminiimonas arsenicoxydans.